A 943-amino-acid chain; its full sequence is Lactoferrin-binding protein A (943 aa).

The signal sequence occupies residues 1–27; sequence MNKKHGFPLTLTALAIATAFPAYAAQA. One can recognise a TBDR plug domain in the interval 52–178; that stretch reads RRSKEATGLG…LGGAVAFRTK (127 aa). The region spanning 189–943 is the TBDR beta-barrel domain; that stretch reads SWGIQAKTAY…NFSLALEMKF (755 aa). The TonB C-terminal box signature appears at 926–943; the sequence is GRYAAPGRNFSLALEMKF.

The protein belongs to the TonB-dependent receptor family.

Its subcellular location is the cell outer membrane. In terms of biological role, unknown. May be an iron-siderophore receptor. This is Lactoferrin-binding protein A (lbpA) from Neisseria meningitidis serogroup B (strain ATCC BAA-335 / MC58).